The chain runs to 123 residues: Large ribosomal subunit protein uL14 (123 aa).

This sequence belongs to the universal ribosomal protein uL14 family. As to quaternary structure, part of the 50S ribosomal subunit. Forms a cluster with proteins L3 and L19. In the 70S ribosome, L14 and L19 interact and together make contacts with the 16S rRNA in bridges B5 and B8.

In terms of biological role, binds to 23S rRNA. Forms part of two intersubunit bridges in the 70S ribosome. In Erwinia tasmaniensis (strain DSM 17950 / CFBP 7177 / CIP 109463 / NCPPB 4357 / Et1/99), this protein is Large ribosomal subunit protein uL14.